The following is a 91-amino-acid chain: Probable Fe(2+)-trafficking protein (91 aa).

It belongs to the Fe(2+)-trafficking protein family.

In terms of biological role, could be a mediator in iron transactions between iron acquisition and iron-requiring processes, such as synthesis and/or repair of Fe-S clusters in biosynthetic enzymes. This is Probable Fe(2+)-trafficking protein from Polynucleobacter necessarius subsp. necessarius (strain STIR1).